The sequence spans 154 residues: Putative pre-16S rRNA nuclease (154 aa).

It belongs to the YqgF nuclease family.

It localises to the cytoplasm. Could be a nuclease involved in processing of the 5'-end of pre-16S rRNA. The chain is Putative pre-16S rRNA nuclease from Rickettsia conorii (strain ATCC VR-613 / Malish 7).